We begin with the raw amino-acid sequence, 395 residues long: Probable peptidoglycan glycosyltransferase FtsW (395 aa).

Over 1–24 (MADLAAGVAERGPRLSLWSSLDQR) the chain is Cytoplasmic. Residues 25–45 (LVWVVAATALLGLVMVASASI) form a helical membrane-spanning segment. Residues 46–62 (SMAEQATGDPFYFFKRQ) lie on the Periplasmic side of the membrane. Residues 63-83 (IFFALLGLGMALALLQIPLAT) form a helical membrane-spanning segment. Residues 84 to 86 (WER) are Cytoplasmic-facing. A helical transmembrane segment spans residues 87-107 (AGPGLLLGALALLVLVLIPGV). Residues 108 to 116 (GREVNGAVR) are Periplasmic-facing. A helical transmembrane segment spans residues 117–137 (WIPLGVFNLQVAEVVKVLLAL). Over 138 to 152 (YLAGFLVRRQQQLRT) the chain is Cytoplasmic. Residues 153-173 (SMAAFLVPVLVSAACAFLLLL) form a helical membrane-spanning segment. Over 174–178 (QPDFG) the chain is Periplasmic. A helical transmembrane segment spans residues 179–199 (TALMLMALAVGLLYLAGAPLW). R200 is a topological domain (cytoplasmic). The chain crosses the membrane as a helical span at residues 201-221 (FAALVGVLAAAAAALVVYSPY). The Periplasmic segment spans residues 222-276 (RWQRVTAFMDPWSDPFNTGFQLTQSLIAIGRGDWLGVGLGGSVQKLFYLPEAHTD). The chain crosses the membrane as a helical span at residues 277 to 297 (FVFSVLAEELGWLGVLAVVLL). Topologically, residues 298–316 (FSYIVWRAMAVGWQCHRHR) are cytoplasmic. The helical transmembrane segment at 317-337 (LPFAGYLAWAVGLALGLQAFI) threads the bilayer. The Periplasmic portion of the chain corresponds to 338-352 (NMGVATGLLPTKGLT). A helical membrane pass occupies residues 353–373 (LPLFSYGGSSALATGAMVGLL). The Cytoplasmic segment spans residues 374–395 (LRCGYELAQARAEGRRPEEAAS).

Belongs to the SEDS family. FtsW subfamily.

Its subcellular location is the cell inner membrane. The catalysed reaction is [GlcNAc-(1-&gt;4)-Mur2Ac(oyl-L-Ala-gamma-D-Glu-L-Lys-D-Ala-D-Ala)](n)-di-trans,octa-cis-undecaprenyl diphosphate + beta-D-GlcNAc-(1-&gt;4)-Mur2Ac(oyl-L-Ala-gamma-D-Glu-L-Lys-D-Ala-D-Ala)-di-trans,octa-cis-undecaprenyl diphosphate = [GlcNAc-(1-&gt;4)-Mur2Ac(oyl-L-Ala-gamma-D-Glu-L-Lys-D-Ala-D-Ala)](n+1)-di-trans,octa-cis-undecaprenyl diphosphate + di-trans,octa-cis-undecaprenyl diphosphate + H(+). Its pathway is cell wall biogenesis; peptidoglycan biosynthesis. In terms of biological role, peptidoglycan polymerase that is essential for cell division. The sequence is that of Probable peptidoglycan glycosyltransferase FtsW from Halorhodospira halophila (strain DSM 244 / SL1) (Ectothiorhodospira halophila (strain DSM 244 / SL1)).